The sequence spans 597 residues: Apurinic-apyrimidinic endonuclease 1 (597 aa).

Residues 232–246 (YNNDTKYLSNPKGVT) are compositionally biased toward polar residues. Residues 232–296 (YNNDTKYLSN…IPPIPKNTED (65 aa)) form a disordered region. A compositionally biased stretch (low complexity) spans 265 to 274 (NNNNNNNNNK). Positions 380, 420, 456, 490, 493, 527, 540, 542, and 572 each coordinate Zn(2+). Position 493 (H493) interacts with Mn(2+). Residues D540 and H542 each contribute to the Mn(2+) site.

This sequence belongs to the AP endonuclease 2 family. The cofactor is Zn(2+). It depends on Mn(2+) as a cofactor. May be proteolytically cleaved into a 59 kDa form.

The protein localises to the mitochondrion. Its activity is regulated as follows. Apurinic/apyrimidinic (AP) endonuclease activity is enhanced with increasing concentrations of Mn(2+), while Zn(2+) initially enhances activity but subsequently inhibits activity in a concentration-dependent manner. Co(2+) inhibits apurinic/apyrimidinic (AP) endonuclease activity at concentrations greater than 2.5 mM. Plays a role in mitochondrial DNA base excision repair (BER) pathway induced by oxidative stress. Has apurinic/apyrimidinic (AP) endonuclease activity towards double-stranded DNA (dsDNA) with a preference for C as opposite base. Has 3'-phosphatase activity; removes 3'-phosphate from blunt-end, recessed, and gapped DNA templates and thus, removes 3'-blocks for DNA polymerase activity during BER. Lacks 3'-5' exonuclease activity and does not cleave damaged bases by nucleotide incision repair (NIR). The polypeptide is Apurinic-apyrimidinic endonuclease 1 (Plasmodium falciparum (isolate 3D7)).